The following is a 528-amino-acid chain: 4-chlorobenzoate--CoA ligase (528 aa).

Residues 161–169, 300–305, and asparagine 409 contribute to the ATP site; these read TSGTTGLPK and NIYGTT.

The protein belongs to the ATP-dependent AMP-binding enzyme family. In terms of assembly, homodimer. The cofactor is Mg(2+).

It catalyses the reaction 4-chlorobenzoate + ATP + CoA = 4-chlorobenzoyl-CoA + AMP + diphosphate. It participates in xenobiotic degradation; 4-chlorobenzoate degradation; 4-hydroxybenzoate from 4-chlorobenzoate: step 2/3. Its activity is regulated as follows. Unaffected by 5,5'-dithiobis-(2-nitrobenzoic acid), 4-chloromercuribenzoate and sodium azide. Inhibited by Cu(2+), Fe(2+) and Zn(2+). Unaffected by Na(+), K(+) and Li(+). Its function is as follows. Catalyzes the formation of chlorobenzoyl-CoA via a 2 step reaction. First 4-chlorobenzoyl is adenylated by ATP, followed by acyl transfer from the 4-chlorobenzoyl-AMP intermediate to CoA. Benzoate, 4-bromobenzoate, 4-iodobenzoate and 4-methylbenzoate also act as substrates. Inactive towards 4-aminobenzoate, 4-hydroxybenzoate, 2-aminobenzoate, 2,3-dihydroxybenzoate, 4-coumarate and the aliphatic carboxylic acids palmate, caproate, laurate and butyrate. Negligible activity is detected when ATP is replaced by UTP, CTP or GTP as cosubstrate. The protein is 4-chlorobenzoate--CoA ligase of Pseudomonas sp. (strain CBS-3).